Reading from the N-terminus, the 155-residue chain is Putative pre-16S rRNA nuclease (155 aa).

This sequence belongs to the YqgF nuclease family.

The protein resides in the cytoplasm. Its function is as follows. Could be a nuclease involved in processing of the 5'-end of pre-16S rRNA. The chain is Putative pre-16S rRNA nuclease from Wolbachia pipientis wMel.